Here is a 213-residue protein sequence, read N- to C-terminus: Putative cytochrome c-type biogenesis protein HI_1454 (213 aa).

6 consecutive transmembrane segments (helical) span residues glycine 15–leucine 35, phenylalanine 46–leucine 66, isoleucine 77–glycine 97, alanine 118–alanine 138, alanine 154–phenylalanine 174, and phenylalanine 192–phenylalanine 212.

The protein belongs to the DsbD family.

It localises to the cell membrane. Its function is as follows. Could be involved in cytochrome c synthesis. The protein is Putative cytochrome c-type biogenesis protein HI_1454 of Haemophilus influenzae (strain ATCC 51907 / DSM 11121 / KW20 / Rd).